The following is a 255-amino-acid chain: Thiazole synthase (255 aa).

The active-site Schiff-base intermediate with DXP is the K96. 1-deoxy-D-xylulose 5-phosphate is bound by residues G157, 183 to 184 (AG), and 205 to 206 (NT).

It belongs to the ThiG family. In terms of assembly, homotetramer. Forms heterodimers with either ThiH or ThiS.

The protein localises to the cytoplasm. It carries out the reaction [ThiS sulfur-carrier protein]-C-terminal-Gly-aminoethanethioate + 2-iminoacetate + 1-deoxy-D-xylulose 5-phosphate = [ThiS sulfur-carrier protein]-C-terminal Gly-Gly + 2-[(2R,5Z)-2-carboxy-4-methylthiazol-5(2H)-ylidene]ethyl phosphate + 2 H2O + H(+). The protein operates within cofactor biosynthesis; thiamine diphosphate biosynthesis. Functionally, catalyzes the rearrangement of 1-deoxy-D-xylulose 5-phosphate (DXP) to produce the thiazole phosphate moiety of thiamine. Sulfur is provided by the thiocarboxylate moiety of the carrier protein ThiS. In vitro, sulfur can be provided by H(2)S. This is Thiazole synthase from Geobacillus thermodenitrificans (strain NG80-2).